The following is a 314-amino-acid chain: Formylglycine-generating enzyme (314 aa).

Residues 1–20 (MAVAAPSPAAAAEPGPAARP) are compositionally biased toward low complexity. The interval 1-31 (MAVAAPSPAAAAEPGPAARPRSTRGQVRLPG) is disordered. Ca(2+) contacts are provided by N194, I195, D208, and H210. The Cu(2+) site is built by C272 and C277.

This sequence belongs to the sulfatase-modifying factor family. Cu(2+) serves as cofactor.

The enzyme catalyses L-cysteinyl-[sulfatase] + 2 a thiol + O2 = an organic disulfide + 3-oxo-L-alanyl-[sulfatase] + hydrogen sulfide + H2O + H(+). It functions in the pathway protein modification; sulfatase oxidation. In terms of biological role, oxidase that catalyzes the conversion of cysteine to 3-oxoalanine on target proteins. 3-oxoalanine modification, which is also named formylglycine (fGly), occurs in the maturation of arylsulfatases and some alkaline phosphatases that use the hydrated form of 3-oxoalanine as a catalytic nucleophile. The chain is Formylglycine-generating enzyme from Streptomyces coelicolor (strain ATCC BAA-471 / A3(2) / M145).